The primary structure comprises 121 residues: Large ribosomal subunit protein bL12 (121 aa).

Belongs to the bacterial ribosomal protein bL12 family. As to quaternary structure, homodimer. Part of the ribosomal stalk of the 50S ribosomal subunit. Forms a multimeric L10(L12)X complex, where L10 forms an elongated spine to which 2 to 4 L12 dimers bind in a sequential fashion. Binds GTP-bound translation factors.

Forms part of the ribosomal stalk which helps the ribosome interact with GTP-bound translation factors. Is thus essential for accurate translation. The protein is Large ribosomal subunit protein bL12 of Erwinia tasmaniensis (strain DSM 17950 / CFBP 7177 / CIP 109463 / NCPPB 4357 / Et1/99).